A 320-amino-acid chain; its full sequence is UDP-3-O-acyl-N-acetylglucosamine deacetylase (320 aa).

Zn(2+) contacts are provided by His-92, His-251, and Asp-255. The active-site Proton donor is the His-278.

This sequence belongs to the LpxC family. The cofactor is Zn(2+).

The enzyme catalyses a UDP-3-O-[(3R)-3-hydroxyacyl]-N-acetyl-alpha-D-glucosamine + H2O = a UDP-3-O-[(3R)-3-hydroxyacyl]-alpha-D-glucosamine + acetate. It functions in the pathway glycolipid biosynthesis; lipid IV(A) biosynthesis; lipid IV(A) from (3R)-3-hydroxytetradecanoyl-[acyl-carrier-protein] and UDP-N-acetyl-alpha-D-glucosamine: step 2/6. Functionally, catalyzes the hydrolysis of UDP-3-O-myristoyl-N-acetylglucosamine to form UDP-3-O-myristoylglucosamine and acetate, the committed step in lipid A biosynthesis. The protein is UDP-3-O-acyl-N-acetylglucosamine deacetylase of Psychrobacter arcticus (strain DSM 17307 / VKM B-2377 / 273-4).